We begin with the raw amino-acid sequence, 277 residues long: Release factor glutamine methyltransferase (277 aa).

Residues 117-121 (GTGTG), Asp-140, Trp-168, and Asn-183 each bind S-adenosyl-L-methionine. 183 to 186 (NPPY) lines the substrate pocket.

It belongs to the protein N5-glutamine methyltransferase family. PrmC subfamily.

The catalysed reaction is L-glutaminyl-[peptide chain release factor] + S-adenosyl-L-methionine = N(5)-methyl-L-glutaminyl-[peptide chain release factor] + S-adenosyl-L-homocysteine + H(+). Its function is as follows. Methylates the class 1 translation termination release factors RF1/PrfA and RF2/PrfB on the glutamine residue of the universally conserved GGQ motif. The sequence is that of Release factor glutamine methyltransferase from Shigella flexneri.